Here is a 785-residue protein sequence, read N- to C-terminus: MLTRPAQNALLKSMQPLFRFRGCLLAKSTSTPRRDISTSSRKLAHPTTVPIPPSVDDHALVALLDQPSSFGIVSRLFQTQGGLFGHKELQQPSGFITLAEATLVRAQILTNRILRARESQDELRKVVKNLDRLSDMLCGVIDLAELVRNAHPDRAWVEAANQAYETLCEFMNVLNTDVGLYDVLKAVLSDPTIVQGMGPEEYSTAQIFWHDFEKSAINLPPEQRQRFVSLSSEILVLGREFLQEANTARPPASIHASELAGLKDKGMGARLQLQAQFTQKDLLVYPGSLQAQMIMRCAPAEEPRRKLYIAANSSTPSQIELLERLLRTRAELARLVGKESFAHMTLSDKMAKSPENVQYFLDALMDYTRPYARKALRTLSMRKQAHLQTPPFPTIQPWDRDFYCPPEPPAPPIPLPPLTLGTVFAGLSRLFYHLYGISLRPAECAPGEVWHPHVHKLEVVDEDAGVIGWIYADLFARRGKPSGAAHYTVRCSRRTDDDDEAEDGSIPAAEPYVRVSQSFESSKRHRVRGQDGEFQLPLVVLVCEFARPSVSSGPTVLDWHEVMTLFHEMGHAMHSMIGRTEYQNVSGTRCATDFVELPSILMEHFLSSPTVLSLFDVSSSTPSSAWQVGNHHQDPCHSIDTHSQILLAAMDQIYHSPSVVDPSFSSTSALEALHKSRGLIPYVPGTSFQTQFGHLFGYGATYYSYLFDRAIASRVWSQVFHANPLNRELGDKYKREVLKFGGGRDPWKMISHLLDSPWLENGNADAMKEVGQWRIEDEVGQPGRH.

The N-terminal 43 residues, 1–43, are a transit peptide targeting the mitochondrion; it reads MLTRPAQNALLKSMQPLFRFRGCLLAKSTSTPRRDISTSSRKL. His567 is a binding site for Zn(2+). Glu568 is a catalytic residue. The Zn(2+) site is built by His571 and His574.

Belongs to the peptidase M3 family. Zn(2+) serves as cofactor.

The protein localises to the mitochondrion matrix. The enzyme catalyses Release of an N-terminal octapeptide as second stage of processing of some proteins imported into the mitochondrion.. In terms of biological role, cleaves proteins, imported into the mitochondrion, to their mature size. While most mitochondrial precursor proteins are processed to the mature form in one step by mitochondrial processing peptidase (MPP), the sequential cleavage by MIP of an octapeptide after initial processing by MPP is a required step for a subgroup of nuclear-encoded precursor proteins destined for the matrix or the inner membrane. This chain is Mitochondrial intermediate peptidase (OCT1), found in Pleurotus djamor (Pink oyster mushroom).